The chain runs to 326 residues: CRISPR-associated endonuclease Cas1 (326 aa).

3 residues coordinate Mn(2+): glutamate 191, histidine 255, and aspartate 269.

It belongs to the CRISPR-associated endonuclease Cas1 family. Homodimer. Interacts with Cas3, in the absence of crRNA. The cofactor is Mg(2+). Requires Mn(2+) as cofactor.

Its function is as follows. CRISPR (clustered regularly interspaced short palindromic repeat), is an adaptive immune system that provides protection against mobile genetic elements (viruses, transposable elements and conjugative plasmids). CRISPR clusters contain sequences complementary to antecedent mobile elements and target invading nucleic acids. CRISPR clusters are transcribed and processed into CRISPR RNA (crRNA). Acts as a dsDNA endonuclease. Involved in the integration of spacer DNA into the CRISPR cassette. The polypeptide is CRISPR-associated endonuclease Cas1 (Pectobacterium atrosepticum (strain SCRI 1043 / ATCC BAA-672) (Erwinia carotovora subsp. atroseptica)).